The following is a 208-amino-acid chain: uncharacterized protein (208 aa).

4Fe-4S ferredoxin-type domains are found at residues 59–88 (GVLVTQRARCTGCHRCEISCTNFNDGSVGT), 114–145 (GDLNYTADTCRQCKEPQCMNVCPIGAITWQQK), 147–176 (GCITVDHKRCIGCSACTTACPWMMATVNTE), and 174–203 (NTESKKSSKCVLCGECANACPTGALKIIEW). 16 residues coordinate [4Fe-4S] cluster: Cys-68, Cys-71, Cys-74, Cys-78, Cys-123, Cys-126, Cys-131, Cys-135, Cys-156, Cys-159, Cys-162, Cys-166, Cys-183, Cys-186, Cys-189, and Cys-193.

This is an uncharacterized protein from Escherichia coli O157:H7.